Here is a 602-residue protein sequence, read N- to C-terminus: Pentatricopeptide repeat-containing protein At5g11310, mitochondrial (602 aa).

Residues 1–35 (MNSLFTAFRRNLLLNPNPHRNFFLHRLLSSSRRSS) constitute a mitochondrion transit peptide. 11 PPR repeats span residues 134-165 (SPSL…VRSD), 172-202 (SADT…ARSY), 211-241 (ELRL…IGGT), 249-283 (SVRI…NVKP), 284-318 (TVVT…EMEI), 319-353 (NFMV…ESGP), 354-388 (TIVT…GVDP), 389-423 (TTTT…GHSP), 424-458 (DRLT…GIDP), 459-493 (DLLT…GIIP), and 494-528 (QYIT…PHSK).

The protein belongs to the PPR family. P subfamily.

It localises to the mitochondrion. The polypeptide is Pentatricopeptide repeat-containing protein At5g11310, mitochondrial (Arabidopsis thaliana (Mouse-ear cress)).